The chain runs to 212 residues: Pyridoxine/pyridoxamine 5'-phosphate oxidase (212 aa).

Residues 8-11 (RREY) and lysine 66 each bind substrate. Residues 61–66 (RIVLLK), 76–77 (FT), arginine 82, lysine 83, and glutamine 105 each bind FMN. Substrate-binding residues include tyrosine 123, arginine 127, and serine 131. Residues 140-141 (QS) and tryptophan 185 each bind FMN. 191–193 (RLH) provides a ligand contact to substrate. Arginine 195 serves as a coordination point for FMN.

This sequence belongs to the pyridoxamine 5'-phosphate oxidase family. In terms of assembly, homodimer. It depends on FMN as a cofactor.

It catalyses the reaction pyridoxamine 5'-phosphate + O2 + H2O = pyridoxal 5'-phosphate + H2O2 + NH4(+). It carries out the reaction pyridoxine 5'-phosphate + O2 = pyridoxal 5'-phosphate + H2O2. The protein operates within cofactor metabolism; pyridoxal 5'-phosphate salvage; pyridoxal 5'-phosphate from pyridoxamine 5'-phosphate: step 1/1. It participates in cofactor metabolism; pyridoxal 5'-phosphate salvage; pyridoxal 5'-phosphate from pyridoxine 5'-phosphate: step 1/1. Catalyzes the oxidation of either pyridoxine 5'-phosphate (PNP) or pyridoxamine 5'-phosphate (PMP) into pyridoxal 5'-phosphate (PLP). The chain is Pyridoxine/pyridoxamine 5'-phosphate oxidase from Shewanella halifaxensis (strain HAW-EB4).